Reading from the N-terminus, the 122-residue chain is Proteasome assembly chaperone 3 (122 aa).

The residue at position 1 (Met-1) is an N-acetylmethionine.

This sequence belongs to the PSMG3 family. As to quaternary structure, homodimer. Interacts with PSMG4. Interacts directly with alpha and beta subunits of the 20S proteasome but dissociates before the formation of half-proteasomes, probably upon recruitment of POMP.

Functionally, chaperone protein which promotes assembly of the 20S proteasome. May cooperate with PSMG1-PSMG2 heterodimers to orchestrate the correct assembly of proteasomes. This is Proteasome assembly chaperone 3 from Homo sapiens (Human).